The primary structure comprises 199 residues: Pyrrolidone-carboxylate peptidase (199 aa).

Active-site residues include Glu80, Cys142, and His166.

This sequence belongs to the peptidase C15 family. In terms of assembly, homotetramer.

It is found in the cytoplasm. The enzyme catalyses Release of an N-terminal pyroglutamyl group from a polypeptide, the second amino acid generally not being Pro.. In terms of biological role, removes 5-oxoproline from various penultimate amino acid residues except L-proline. The protein is Pyrrolidone-carboxylate peptidase of Oceanobacillus iheyensis (strain DSM 14371 / CIP 107618 / JCM 11309 / KCTC 3954 / HTE831).